Consider the following 219-residue polypeptide: MSTGESEGEQAERMAFILGLRQRGIRDVGVLRAMELVPRPLFVDPALRRHAYDDVALPIACGQTMSQPSLVAAMTEALSLTADHSVLEVGTGSGYHAAVLSHLAARVVTVDRYRSLVAEAQARFEVLGLRNVTAYVGDGTLGMPARAPFDRILVTAAAPDIPFALIDQLKFGGVIVMPLGAPEEIQTLVRYVKEQSGRTRTELMKVRFVPLIPGAAATL.

Ser-66 is an active-site residue.

The protein belongs to the methyltransferase superfamily. L-isoaspartyl/D-aspartyl protein methyltransferase family.

The protein localises to the cytoplasm. The catalysed reaction is [protein]-L-isoaspartate + S-adenosyl-L-methionine = [protein]-L-isoaspartate alpha-methyl ester + S-adenosyl-L-homocysteine. Its function is as follows. Catalyzes the methyl esterification of L-isoaspartyl residues in peptides and proteins that result from spontaneous decomposition of normal L-aspartyl and L-asparaginyl residues. It plays a role in the repair and/or degradation of damaged proteins. This is Protein-L-isoaspartate O-methyltransferase from Xanthobacter autotrophicus (strain ATCC BAA-1158 / Py2).